The sequence spans 1136 residues: Myosin-binding protein C, fast-type (1136 aa).

Disordered stretches follow at residues 1–55 (MPEA…KKPD) and 151–177 (APRQ…DAGE). Residues 13 to 35 (KGKDAPKEAPAKQTPEEPPKEAP) show a composition bias toward basic and acidic residues. In terms of domain architecture, Ig-like C2-type 1 spans 46–149 (PTGIFLKKPD…CDSCSFNVDV (104 aa)). Residues 163–174 (SFKRSGDGKSED) show a composition bias toward basic and acidic residues. Ig-like C2-type domains follow at residues 250–339 (SAAF…VKEP), 340–432 (PVLI…VEEK), 433–533 (QLEV…KQEP), and 534–633 (PKIH…VVDV). Fibronectin type-III domains lie at 636-732 (PPEA…IAPT) and 734-829 (APQH…IREI). In terms of domain architecture, Ig-like C2-type 6 spans 833 to 927 (PKIRLPRHLR…ATIRIRVVEK (95 aa)). Residues 930-1025 (PAENVMVKEV…SKNTARILKT (96 aa)) form the Fibronectin type-III 3 domain. Residues 1043 to 1136 (PKFLTPLMDR…ECKLDVRVPQ (94 aa)) form the Ig-like C2-type 7 domain.

It belongs to the immunoglobulin superfamily. MyBP family.

In terms of biological role, thick filament-associated protein located in the crossbridge region of vertebrate striated muscle a bands. In vitro it binds MHC, F-actin and native thin filaments, and modifies the activity of actin-activated myosin ATPase. It may modulate muscle contraction or may play a more structural role. The sequence is that of Myosin-binding protein C, fast-type (Mybpc2) from Mus musculus (Mouse).